Here is a 272-residue protein sequence, read N- to C-terminus: Shikimate dehydrogenase (NADP(+)) (272 aa).

Shikimate is bound by residues 20–22 (TMS) and threonine 67. Lysine 71 serves as the catalytic Proton acceptor. Glutamate 83 contributes to the NADP(+) binding site. 2 residues coordinate shikimate: asparagine 92 and aspartate 107. NADP(+) is bound by residues 129-133 (GAGGA), 153-158 (NRTKSK), and leucine 216. Tyrosine 218 serves as a coordination point for shikimate. NADP(+) is bound at residue glycine 239.

This sequence belongs to the shikimate dehydrogenase family. Homodimer.

The catalysed reaction is shikimate + NADP(+) = 3-dehydroshikimate + NADPH + H(+). It functions in the pathway metabolic intermediate biosynthesis; chorismate biosynthesis; chorismate from D-erythrose 4-phosphate and phosphoenolpyruvate: step 4/7. Functionally, involved in the biosynthesis of the chorismate, which leads to the biosynthesis of aromatic amino acids. Catalyzes the reversible NADPH linked reduction of 3-dehydroshikimate (DHSA) to yield shikimate (SA). The polypeptide is Shikimate dehydrogenase (NADP(+)) (Maridesulfovibrio salexigens (strain ATCC 14822 / DSM 2638 / NCIMB 8403 / VKM B-1763) (Desulfovibrio salexigens)).